A 542-amino-acid polypeptide reads, in one-letter code: Chaperonin GroEL (542 aa).

ATP contacts are provided by residues 30–33 (TLGP), lysine 51, 87–91 (DGTTT), glycine 415, 480–482 (NAA), and aspartate 496.

It belongs to the chaperonin (HSP60) family. In terms of assembly, forms a cylinder of 14 subunits composed of two heptameric rings stacked back-to-back. Interacts with the co-chaperonin GroES.

It localises to the cytoplasm. The catalysed reaction is ATP + H2O + a folded polypeptide = ADP + phosphate + an unfolded polypeptide.. In terms of biological role, together with its co-chaperonin GroES, plays an essential role in assisting protein folding. The GroEL-GroES system forms a nano-cage that allows encapsulation of the non-native substrate proteins and provides a physical environment optimized to promote and accelerate protein folding. This chain is Chaperonin GroEL, found in Tremblaya princeps.